The following is a 91-amino-acid chain: HssA/B-like protein 24 (91 aa).

The protein belongs to the hssA/B family.

The protein is HssA/B-like protein 24 (hssl24) of Dictyostelium discoideum (Social amoeba).